We begin with the raw amino-acid sequence, 219 residues long: Transmembrane emp24 domain-containing protein 10 (219 aa).

An N-terminal signal peptide occupies residues 1–31 (MSGLSGPPTRRGPFPLALLLLFLLGPSLVLA). Residues 1-142 (MSGLSGPPTR…KNYEEIAKVE (142 aa)) form a required for interaction with STX17 region. The Lumenal portion of the chain corresponds to 32–185 (ISFHLPINSR…RDTNESTNTR (154 aa)). The GOLD domain maps to 41 to 193 (RKCLREEIHK…TRVLYFSIFS (153 aa)). Arg-171 and Arg-176 each carry dimethylated arginine. N-linked (GlcNAc...) asparagine glycosylation is present at Asn-179. Residues 186-206 (VLYFSIFSMFCLIGLATWQVF) form a helical membrane-spanning segment. The interval 204-219 (QVFYLRRFFKAKKLIE) is interaction with COPG1. Residues 207–219 (YLRRFFKAKKLIE) are Cytoplasmic-facing. Residues 207 to 219 (YLRRFFKAKKLIE) are interaction with ARF1 and IL1B. The COPII vesicle coat-binding motif lies at 211–212 (FF). The short motif at 211–219 (FFKAKKLIE) is the COPI vesicle coat-binding element.

This sequence belongs to the EMP24/GP25L family. As to quaternary structure, predominantly dimeric and to a lesser extent monomeric in the ER. Monomer and dimer in ERGIC and cis-Golgi network. Forms homooligomer (via GOLD domain); the assembly is promoted by direct binding with leaderless cargos and may form a protein channel that facilitates cargo entry into the ERGIC. Forms heterooligomeric complexes with other members of the p24 family such as TMED2, TMED7 and TMED9. Interacts (via GOLD domain) with TMED2 (via GOLD domain); the complex is required for export of TMED10 from the ER to the cis-Golgi network; the complex is proposed to be involved in cis-Golgi network dynamics and / or biogenesis. Associates with the COPI vesicle coat subunits (coatomer). Tetramerization of the cytoplasmic domain at the Golgi membrane in vitro; the complex is proposed to interact with COPI coatomer and induce budding of the vesicles. Interacts with COPG1; the interaction involves TMED10 homodimer. Interacts with ARF1 (GDP-bound); the interaction probably involves a TMED10 oligomer. Interacts with SEC23A, SEC24B, SEC24C and SEC24D components of the coat protein complex II/COPII, indicative of an association of TMED10 with the COPII vesicle coat. Interacts with CD59. Interacts with MPPE1/PGAP5; the complex might recruit and sort GPI-anchored proteins to the ER-exit site, or the interaction might lead to recycling of PGAP5 between the ER and the Golgi. Interacts with F2LR1/PAR2. Interacts with KDELR2/ERD2; the interaction is disrupted by KDELR2 ligand. Found in a complex composed at least of SURF4, TMED2 and TMED10. Associates with the presenilin-dependent gamma-secretase complex. Interacts with STX17; the interaction is direct. Interacts with IL-1; the interaction is direct. Interacts with RAB21 (active GTP-bound form); the interaction is indirect and regulates TMED10 abundance and localization at the Golgi.

The protein localises to the endoplasmic reticulum membrane. Its subcellular location is the endoplasmic reticulum-Golgi intermediate compartment membrane. It is found in the golgi apparatus membrane. The protein resides in the golgi apparatus. It localises to the cis-Golgi network membrane. The protein localises to the trans-Golgi network membrane. Its subcellular location is the cytoplasmic vesicle. It is found in the secretory vesicle membrane. The protein resides in the cell membrane. It localises to the melanosome. Functionally, cargo receptor involved in protein vesicular trafficking and quality control in the endoplasmic reticulum (ER) and Golgi. The p24 protein family is a group of transmembrane proteins that bind coat protein complex I/COPI and coat protein complex II/COPII involved in vesicular trafficking between the membranes. Acts at the lumenal side for incorporation of secretory cargo molecules into transport vesicles and involved in vesicle coat formation at the cytoplasmic side. Mainly functions in the early secretory pathway and cycles between the ER, ER-Golgi intermediate compartment (ERGIC) and Golgi, mediating cargo transport through COPI and COPII-coated vesicles. In COPII vesicle-mediated anterograde transport, involved in the transport of GPI-anchored proteins by acting together with TMED2 as their cargo receptor; the function specifically implies SEC24C and SEC24D of the COPII vesicle coat and lipid raft-like microdomains of the ER. Recognizes GPI anchors structural remodeled in the ER by the GPI inositol-deacylase/PGAP1 and the metallophosphoesterase MPPE1/PGAP5. In COPI vesicle-mediated retrograde transport, involved in the biogenesis of COPI vesicles and vesicle coat recruitment. Involved in trafficking of amyloid beta A4 protein and soluble APP-beta release (independent from the modulation of gamma-secretase activity). Involved in the KDELR2-mediated retrograde transport of the toxin A subunit (CTX-A-K63)together with COPI and the COOH terminus of KDELR2. On Golgi membranes, acts as a primary receptor for ARF1-GDP, a GTP-binding protein involved in COPI-vesicle formation. Increases coatomer-dependent GTPase-activating activity of ARFGAP2 which mediates the hydrolysis of ARF1-bound GTP and therefore modulates protein trafficking from the Golgi apparatus. Involved in the exocytic trafficking of G protein-coupled receptors F2LR1/PAR2 (trypsin and tryspin-like enzyme receptor), OPRM1 (opioid receptor) and P2RY4 (UTD and UDP receptor) from the Golgi to the plasma membrane, thus contributing to receptor resensitization. In addition to its cargo receptor activity, may also act as a protein channel after oligomerization, facilitating the post-translational entry of leaderless cytoplasmic cargo into the ERGIC. Involved in the translocation into ERGIC, the vesicle entry and the secretion of leaderless cargos (lacking the secretion signal sequence), including the mature form of interleukin 1/IL-1 family members, the alpha-crystallin B chain HSPB5, the carbohydrate-binding proteins galectin-1/LGALS1 and galectin-3/LGALS3, the microtubule-associated protein Tau/MAPT, and the annexin A1/ANXA1; the translocation process is dependent on cargo protein unfolding and enhanced by chaperones HSP90AB1 and HSP90B1/GRP9. Could also associates with the presenilin-dependent gamma-secretase complex in order to regulate gamma-cleavages of the amyloid beta A4 protein to yield amyloid-beta 40/Abeta40. The polypeptide is Transmembrane emp24 domain-containing protein 10 (TMED10) (Pongo abelii (Sumatran orangutan)).